A 486-amino-acid polypeptide reads, in one-letter code: NADH-quinone oxidoreductase subunit N (486 aa).

14 consecutive transmembrane segments (helical) span residues 8-28, 36-56, 74-94, 104-124, 125-145, 160-180, 201-221, 239-259, 269-289, 298-318, 329-349, 376-396, 410-432, and 459-479; these read LTAL…ILSI, FVAV…YFLI, ILYI…SYPW, EFYL…ISHH, MASF…LIAY, IILS…VYSI, ILVV…KLSI, VLSF…LNFL, VIYF…NLMA, FLGY…LVSH, AIYL…VNLI, SVLT…GFIG, WLIG…RIIL, and IVIC…NPLI.

It belongs to the complex I subunit 2 family. In terms of assembly, NDH-1 is composed of 13 different subunits. Subunits NuoA, H, J, K, L, M, N constitute the membrane sector of the complex.

It localises to the cell membrane. It catalyses the reaction a quinone + NADH + 5 H(+)(in) = a quinol + NAD(+) + 4 H(+)(out). Functionally, NDH-1 shuttles electrons from NADH, via FMN and iron-sulfur (Fe-S) centers, to quinones in the respiratory chain. The immediate electron acceptor for the enzyme in this species is believed to be ubiquinone. Couples the redox reaction to proton translocation (for every two electrons transferred, four hydrogen ions are translocated across the cytoplasmic membrane), and thus conserves the redox energy in a proton gradient. In Buchnera aphidicola subsp. Acyrthosiphon pisum (strain APS) (Acyrthosiphon pisum symbiotic bacterium), this protein is NADH-quinone oxidoreductase subunit N.